Reading from the N-terminus, the 350-residue chain is Phenylalanine--tRNA ligase alpha subunit (350 aa).

A Mg(2+)-binding site is contributed by E260.

It belongs to the class-II aminoacyl-tRNA synthetase family. Phe-tRNA synthetase alpha subunit type 1 subfamily. As to quaternary structure, tetramer of two alpha and two beta subunits. Requires Mg(2+) as cofactor.

The protein resides in the cytoplasm. It carries out the reaction tRNA(Phe) + L-phenylalanine + ATP = L-phenylalanyl-tRNA(Phe) + AMP + diphosphate + H(+). The chain is Phenylalanine--tRNA ligase alpha subunit from Mesoplasma florum (strain ATCC 33453 / NBRC 100688 / NCTC 11704 / L1) (Acholeplasma florum).